Here is a 236-residue protein sequence, read N- to C-terminus: MRLGVNVDHVATVRQARRTFEPSPVCAALIAQQAGADQITLHLREDRRHIQDRDLELIKELVNIPVNLEMAPTEEMREIALRVRPDRITLVPERREEITTEGGLDVVSMKERLKEYLKPLKEAGIEISLFIEPDKEQIEASRDVGADAIEIHTGRYQPLERHRFEEAREELRRIREAAIYARERGLRVYAGHGLTYHNVKEFVRELKDVVEELNIGHSIVANAVIFGFERAVKEMI.

Residue N6 coordinates 3-amino-2-oxopropyl phosphate. 8–9 is a 1-deoxy-D-xylulose 5-phosphate binding site; sequence DH. R17 contributes to the 3-amino-2-oxopropyl phosphate binding site. H42 acts as the Proton acceptor in catalysis. 1-deoxy-D-xylulose 5-phosphate-binding residues include R44 and H49. E69 functions as the Proton acceptor in the catalytic mechanism. T99 serves as a coordination point for 1-deoxy-D-xylulose 5-phosphate. Residue H192 is the Proton donor of the active site. 3-amino-2-oxopropyl phosphate-binding positions include G193 and 216-217; that span reads GH.

Belongs to the PNP synthase family. In terms of assembly, homooctamer; tetramer of dimers.

The protein resides in the cytoplasm. It carries out the reaction 3-amino-2-oxopropyl phosphate + 1-deoxy-D-xylulose 5-phosphate = pyridoxine 5'-phosphate + phosphate + 2 H2O + H(+). The protein operates within cofactor biosynthesis; pyridoxine 5'-phosphate biosynthesis; pyridoxine 5'-phosphate from D-erythrose 4-phosphate: step 5/5. Catalyzes the complicated ring closure reaction between the two acyclic compounds 1-deoxy-D-xylulose-5-phosphate (DXP) and 3-amino-2-oxopropyl phosphate (1-amino-acetone-3-phosphate or AAP) to form pyridoxine 5'-phosphate (PNP) and inorganic phosphate. The polypeptide is Pyridoxine 5'-phosphate synthase (Aquifex pyrophilus).